The primary structure comprises 264 residues: S-adenosylmethionine decarboxylase proenzyme (264 aa).

Ser113 acts as the Schiff-base intermediate with substrate; via pyruvic acid in catalysis. Position 113 is a pyruvic acid (Ser); by autocatalysis (Ser113). His118 (proton acceptor; for processing activity) is an active-site residue. The active-site Proton donor; for catalytic activity is Cys141.

The protein belongs to the prokaryotic AdoMetDC family. Type 2 subfamily. In terms of assembly, heterooctamer of four alpha and four beta chains arranged as a tetramer of alpha/beta heterodimers. Pyruvate is required as a cofactor. Post-translationally, is synthesized initially as an inactive proenzyme. Formation of the active enzyme involves a self-maturation process in which the active site pyruvoyl group is generated from an internal serine residue via an autocatalytic post-translational modification. Two non-identical subunits are generated from the proenzyme in this reaction, and the pyruvate is formed at the N-terminus of the alpha chain, which is derived from the carboxyl end of the proenzyme. The post-translation cleavage follows an unusual pathway, termed non-hydrolytic serinolysis, in which the side chain hydroxyl group of the serine supplies its oxygen atom to form the C-terminus of the beta chain, while the remainder of the serine residue undergoes an oxidative deamination to produce ammonia and the pyruvoyl group blocking the N-terminus of the alpha chain.

The catalysed reaction is S-adenosyl-L-methionine + H(+) = S-adenosyl 3-(methylsulfanyl)propylamine + CO2. It participates in amine and polyamine biosynthesis; S-adenosylmethioninamine biosynthesis; S-adenosylmethioninamine from S-adenosyl-L-methionine: step 1/1. Its function is as follows. Catalyzes the decarboxylation of S-adenosylmethionine to S-adenosylmethioninamine (dcAdoMet), the propylamine donor required for the synthesis of the polyamines spermine and spermidine from the diamine putrescine. This is S-adenosylmethionine decarboxylase proenzyme from Xanthomonas campestris pv. campestris (strain B100).